Consider the following 248-residue polypeptide: Mannose-binding protein C (248 aa).

The first 20 residues, methionine 1–serine 20, serve as a signal peptide directing secretion. In terms of domain architecture, Collagen-like spans glycine 42–asparagine 99. A disordered region spans residues isoleucine 43 to serine 110. Residue proline 47 is modified to 4-hydroxyproline. The span at lysine 49–glutamate 61 shows a compositional bias: basic and acidic residues. 4-hydroxyproline occurs at positions 73, 79, 82, and 88. The span at lysine 75–serine 87 shows a compositional bias: pro residues. Residues arginine 112–leucine 130 are a coiled coil. The C-type lectin domain occupies valine 134 to glutamate 245. 2 disulfide bridges follow: cysteine 155–cysteine 244 and cysteine 222–cysteine 236.

Oligomeric complex of 3 or more homotrimers. Interacts with MASP1 and MASP2. Interacts with MEP1A and MEP1B and may inhibit their catalytic activity. Hydroxylation on proline residues within the sequence motif, GXPG, is most likely to be 4-hydroxy as this fits the requirement for 4-hydroxylation in vertebrates.

It localises to the secreted. Calcium-dependent lectin involved in innate immune defense. Binds mannose, fucose and N-acetylglucosamine on different microorganisms and activates the lectin complement pathway. Binds to late apoptotic cells, as well as to apoptotic blebs and to necrotic cells, but not to early apoptotic cells, facilitating their uptake by macrophages. The polypeptide is Mannose-binding protein C (MBL2) (Nomascus concolor (Black crested gibbon)).